The following is a 513-amino-acid chain: Palmitoyltransferase ZDHHC14 (513 aa).

Residues 1 to 59 are Cytoplasmic-facing; it reads MHLGVEEPIRECQYNQICTHNSSPMDTPHIKKKKNKRKWQVFPGRNRFYCNGRIMMAKQ. Residues 60 to 80 form a helical membrane-spanning segment; that stretch reads TGVFYLTMVLILVTSGLFFAF. The Lumenal segment spans residues 81–88; the sequence is DCPFLASN. A helical membrane pass occupies residues 89–109; the sequence is LTPAIPAIGGVLFVFVMGMLL. Residues 110-207 are Cytoplasmic-facing; it reads RASFSDPGVL…GNCVGRRNYR (98 aa). One can recognise a DHHC domain in the interval 164–214; sequence KYCFTCKIFRPPRASHCSLCDNCVDRFDHHCPWVGNCVGRRNYRFFYLFIL. Residue Cys194 is the S-palmitoyl cysteine intermediate of the active site. A helical transmembrane segment spans residues 208-228; sequence FFYLFILSLSFLTIFIFAFVI. The Lumenal portion of the chain corresponds to 229-266; the sequence is THVILNALRKALALSTAADFEAVQKDPTGLAFLVLSKT. The chain crosses the membrane as a helical span at residues 267 to 287; it reads ALLDILEVVVCFFSVWSIVGL. Residues 288 to 513 are Cytoplasmic-facing; the sequence is SGFHTYLISS…VRGLVKLSSV (226 aa). The interval 348 to 369 is disordered; sequence FIQPDTPQPATQTNGTSACPPN. Positions 355–369 are enriched in polar residues; the sequence is QPATQTNGTSACPPN.

This sequence belongs to the DHHC palmitoyltransferase family. ERF2/ZDHHC9 subfamily.

The protein localises to the endoplasmic reticulum membrane. Its subcellular location is the golgi apparatus membrane. The enzyme catalyses L-cysteinyl-[protein] + hexadecanoyl-CoA = S-hexadecanoyl-L-cysteinyl-[protein] + CoA. Palmitoyltransferase that could catalyze the addition of palmitate onto various protein substrates. The polypeptide is Palmitoyltransferase ZDHHC14 (zdhhc14) (Danio rerio (Zebrafish)).